Reading from the N-terminus, the 419-residue chain is Tyrosine--tRNA ligase 2 (419 aa).

An L-tyrosine-binding site is contributed by tyrosine 34. The 'HIGH' region signature appears at 39–48; it reads PTGDSMHIGH. Residues tyrosine 168 and glutamine 172 each contribute to the L-tyrosine site. A 'KMSKS' region motif is present at residues 230–234; the sequence is KFGKS. Position 233 (lysine 233) interacts with ATP. In terms of domain architecture, S4 RNA-binding spans 352–418; the sequence is KNIVEWLVDL…GKKNYSLVKL (67 aa).

The protein belongs to the class-I aminoacyl-tRNA synthetase family. TyrS type 1 subfamily. Homodimer.

It is found in the cytoplasm. It catalyses the reaction tRNA(Tyr) + L-tyrosine + ATP = L-tyrosyl-tRNA(Tyr) + AMP + diphosphate + H(+). Functionally, catalyzes the attachment of tyrosine to tRNA(Tyr) in a two-step reaction: tyrosine is first activated by ATP to form Tyr-AMP and then transferred to the acceptor end of tRNA(Tyr). This chain is Tyrosine--tRNA ligase 2, found in Bacillus anthracis.